We begin with the raw amino-acid sequence, 1072 residues long: RIMS-binding protein 2 (1072 aa).

In terms of domain architecture, SH3 1 spans 181-248; sequence GKVHLCVARY…PSNFVDFIQD (68 aa). Fibronectin type-III domains follow at residues 311–404, 407–489, and 503–604; these read VPYP…GKDV, APSQ…KKEA, and PPQD…VPPA. Disordered regions lie at residues 597–681 and 713–800; these read PDLL…APVS and SAGQ…TSHN. The segment covering 599-615 has biased composition (pro residues); the sequence is LLVPPAPHPRTAPPPKP. Residues 620–635 show a composition bias toward basic and acidic residues; the sequence is MDTKDQHLGPHVKVDE. A compositionally biased stretch (low complexity) spans 660 to 670; the sequence is GPGRRSPSPSR. Phosphoserine is present on residues Ser720 and Ser728. Composition is skewed to basic and acidic residues over residues 730–743 and 754–765; these read EVKRRGTSVDDFLK and CHGDEYHTESSR. Positions 771–781 are enriched in acidic residues; that stretch reads DIMEEDEEELY. Phosphoserine occurs at positions 852 and 859. Phosphothreonine is present on Thr861. SH3 domains lie at 868–936 and 972–1039; these read LPAR…EIHA and VPTR…EVPD. The segment at 1044 to 1072 is disordered; sequence HLSDAPPHYSHDPPMRSKAKRKKSVHFTP. The segment covering 1060–1072 has biased composition (basic residues); the sequence is SKAKRKKSVHFTP.

Belongs to the RIMBP family. In terms of assembly, interacts with RIMS1, RIMS2, CACNA1D and CACNA1B, and potentially with other Ca(2+) channel alpha-1 isoforms.

It is found in the cell membrane. The protein resides in the synapse. Its function is as follows. Plays a role in the synaptic transmission as bifunctional linker that interacts simultaneously with RIMS1, RIMS2, CACNA1D and CACNA1B. The polypeptide is RIMS-binding protein 2 (Rimbp2) (Mus musculus (Mouse)).